Reading from the N-terminus, the 245-residue chain is 1-(5-phosphoribosyl)-5-[(5-phosphoribosylamino)methylideneamino] imidazole-4-carboxamide isomerase (245 aa).

Residue aspartate 7 is the Proton acceptor of the active site. The active-site Proton donor is the aspartate 129.

Belongs to the HisA/HisF family.

The protein localises to the cytoplasm. The catalysed reaction is 1-(5-phospho-beta-D-ribosyl)-5-[(5-phospho-beta-D-ribosylamino)methylideneamino]imidazole-4-carboxamide = 5-[(5-phospho-1-deoxy-D-ribulos-1-ylimino)methylamino]-1-(5-phospho-beta-D-ribosyl)imidazole-4-carboxamide. Its pathway is amino-acid biosynthesis; L-histidine biosynthesis; L-histidine from 5-phospho-alpha-D-ribose 1-diphosphate: step 4/9. This Pectobacterium carotovorum subsp. carotovorum (strain PC1) protein is 1-(5-phosphoribosyl)-5-[(5-phosphoribosylamino)methylideneamino] imidazole-4-carboxamide isomerase.